The following is a 299-amino-acid chain: Taste receptor type 2 member 50 (299 aa).

Residue Met1 is a topological domain, extracellular. Residues 2–22 (IPFLHIFFSVLILVLFVLGNF) form a helical membrane-spanning segment. Residues 23–55 (ANGFIALVNFIDWVKRKKISLADQILTALAVSR) are Cytoplasmic-facing. Residues 56 to 76 (VGLLWALLLNWYLTELNPAFY) form a helical membrane-spanning segment. Residues 77–87 (SVELRITSYNA) lie on the Extracellular side of the membrane. A helical transmembrane segment spans residues 88-108 (WVVTNHFSMWLAASLSIFYLL). Residues 109–126 (KIANFSNLSFLNLKRRVR) are Cytoplasmic-facing. A helical transmembrane segment spans residues 127-147 (SIILVILLGSLLFLVCHLLAV). Residues 148 to 181 (NMDENMWTEEYEGNMTGKMKLRNAAHLSYMTVTT) lie on the Extracellular side of the membrane. A glycan (N-linked (GlcNAc...) asparagine) is linked at Asn161. Residues 182-202 (LWSFIPFMLSLISFLMLIFSL) traverse the membrane as a helical segment. Residues 203-229 (CKHLKKMQLHGEGSRDPSTTVHIKALQ) are Cytoplasmic-facing. A helical transmembrane segment spans residues 230–250 (TLISFLLLCAIFFLFLIISVW). Topologically, residues 251–259 (SPRRLQNEP) are extracellular. The chain crosses the membrane as a helical span at residues 260–280 (VFMVCKAVGNIYLSFDSFVLI). At 281–299 (WRTKKLKHIFLLILCQIRC) the chain is on the cytoplasmic side.

Belongs to the G-protein coupled receptor T2R family.

It localises to the membrane. Its function is as follows. Receptor that may play a role in the perception of bitterness and is gustducin-linked. May play a role in sensing the chemical composition of the gastrointestinal content. The activity of this receptor may stimulate alpha gustducin, mediate PLC-beta-2 activation and lead to the gating of TRPM5. This chain is Taste receptor type 2 member 50 (TAS2R50), found in Macaca mulatta (Rhesus macaque).